Consider the following 438-residue polypeptide: Xylose isomerase (438 aa).

Mg(2+)-binding residues include Asp-306 and Asp-308.

Belongs to the xylose isomerase family. Homotetramer. Mg(2+) serves as cofactor.

Its subcellular location is the cytoplasm. It carries out the reaction alpha-D-xylose = alpha-D-xylulofuranose. This is Xylose isomerase from Pseudomonas fluorescens (strain SBW25).